An 810-amino-acid polypeptide reads, in one-letter code: Glycerol-3-phosphate acyltransferase (810 aa).

Residues 305-310 carry the HXXXXD motif motif; sequence CHRSHI.

Belongs to the GPAT/DAPAT family.

It localises to the cell inner membrane. It catalyses the reaction sn-glycerol 3-phosphate + an acyl-CoA = a 1-acyl-sn-glycero-3-phosphate + CoA. The protein operates within phospholipid metabolism; CDP-diacylglycerol biosynthesis; CDP-diacylglycerol from sn-glycerol 3-phosphate: step 1/3. The polypeptide is Glycerol-3-phosphate acyltransferase (Haemophilus influenzae (strain 86-028NP)).